A 48-amino-acid polypeptide reads, in one-letter code: Delta-stichotoxin-Hcr1a (48 aa).

Intrachain disulfides connect C3–C43, C5–C33, and C26–C44. Lysine amide; partial; in Delta-stichotoxin-Hcr1f is present on K48.

The protein belongs to the sea anemone sodium channel inhibitory toxin family. Type II subfamily. As to quaternary structure, probably composed of two peptide chains of 12 and 35 residues connected by two disulfide bonds (Cys-3-Cys-43 and Cys-5-Cys-33). In terms of processing, delta-SHTX-Hcr1f (RTX-VI) may be the result of post-translational modification of delta-SHTX-Hcr1a (RTX-III), which would consist of Arg-13 cleavage.

It localises to the secreted. Its subcellular location is the nematocyst. Functionally, binds to site 3 of voltage-gated sodium channels and inhibits the inactivation process. Specifically inhibits mammalian Nav1.3/SCN3A and Nav1.6/SCN8A sodium channels, as well as insect BgNav1 and VdNav1 sodium channels. Its function is as follows. Binds to site 3 of voltage-gated sodium channels and inhibits the inactivation process. Specifically inhibits mammalian Nav1.2/SCN3A (low inhibition) and Nav1.6/SCN8A sodium channels, as well as insect BgNav1 and VdNav1 sodium channels. The sequence is that of Delta-stichotoxin-Hcr1a from Radianthus crispa (Leathery sea anemone).